The primary structure comprises 64 residues: Large ribosomal subunit protein bL32 (64 aa).

The tract at residues 1–64 (MAVQQNRKTR…APKHGDETEE (64 aa)) is disordered. A compositionally biased stretch (basic residues) spans 7 to 16 (RKTRSKRGMR).

This sequence belongs to the bacterial ribosomal protein bL32 family.

In Methylococcus capsulatus (strain ATCC 33009 / NCIMB 11132 / Bath), this protein is Large ribosomal subunit protein bL32.